The primary structure comprises 308 residues: Ribosomal RNA small subunit methyltransferase H (308 aa).

Residues 33 to 35 (GGY), D51, F82, D96, and Q103 each bind S-adenosyl-L-methionine.

It belongs to the methyltransferase superfamily. RsmH family.

Its subcellular location is the cytoplasm. It carries out the reaction cytidine(1402) in 16S rRNA + S-adenosyl-L-methionine = N(4)-methylcytidine(1402) in 16S rRNA + S-adenosyl-L-homocysteine + H(+). In terms of biological role, specifically methylates the N4 position of cytidine in position 1402 (C1402) of 16S rRNA. This chain is Ribosomal RNA small subunit methyltransferase H, found in Rickettsia canadensis (strain McKiel).